Consider the following 302-residue polypeptide: N-acetylmuramic acid 6-phosphate etherase (302 aa).

The region spanning Ile58 to Lys221 is the SIS domain. The Proton donor role is filled by Glu86. Glu117 is an active-site residue.

It belongs to the GCKR-like family. MurNAc-6-P etherase subfamily. In terms of assembly, homodimer.

The catalysed reaction is N-acetyl-D-muramate 6-phosphate + H2O = N-acetyl-D-glucosamine 6-phosphate + (R)-lactate. Its pathway is amino-sugar metabolism; N-acetylmuramate degradation. Its function is as follows. Specifically catalyzes the cleavage of the D-lactyl ether substituent of MurNAc 6-phosphate, producing GlcNAc 6-phosphate and D-lactate. The protein is N-acetylmuramic acid 6-phosphate etherase of Clostridium botulinum (strain Langeland / NCTC 10281 / Type F).